The primary structure comprises 401 residues: ATP phosphoribosyltransferase regulatory subunit (401 aa).

The tract at residues 373 to 401 (PGQQGGAAAQGCDRRLQQDDGGGWVTRPL) is disordered. The span at 392 to 401 (DGGGWVTRPL) shows a compositional bias: gly residues.

It belongs to the class-II aminoacyl-tRNA synthetase family. HisZ subfamily. Heteromultimer composed of HisG and HisZ subunits.

The protein localises to the cytoplasm. The protein operates within amino-acid biosynthesis; L-histidine biosynthesis; L-histidine from 5-phospho-alpha-D-ribose 1-diphosphate: step 1/9. In terms of biological role, required for the first step of histidine biosynthesis. May allow the feedback regulation of ATP phosphoribosyltransferase activity by histidine. The sequence is that of ATP phosphoribosyltransferase regulatory subunit from Alkalilimnicola ehrlichii (strain ATCC BAA-1101 / DSM 17681 / MLHE-1).